A 335-amino-acid chain; its full sequence is Glyceraldehyde-3-phosphate dehydrogenase (335 aa).

NAD(+) is bound by residues Arg-12 to Ile-13, Asp-34, Arg-78, and Ser-120. D-glyceraldehyde 3-phosphate is bound by residues Ser-151–Thr-153 and Thr-182. The active-site Nucleophile is Cys-152. An NAD(+)-binding site is contributed by Asn-183. D-glyceraldehyde 3-phosphate-binding positions include Arg-197, Thr-210–Gly-211, and Arg-233. Asn-315 is a binding site for NAD(+).

It belongs to the glyceraldehyde-3-phosphate dehydrogenase family. Homotetramer.

It localises to the cytoplasm. The enzyme catalyses D-glyceraldehyde 3-phosphate + phosphate + NAD(+) = (2R)-3-phospho-glyceroyl phosphate + NADH + H(+). It participates in carbohydrate degradation; glycolysis; pyruvate from D-glyceraldehyde 3-phosphate: step 1/5. Its function is as follows. Catalyzes the oxidative phosphorylation of glyceraldehyde 3-phosphate (G3P) to 1,3-bisphosphoglycerate (BPG) using the cofactor NAD. The first reaction step involves the formation of a hemiacetal intermediate between G3P and a cysteine residue, and this hemiacetal intermediate is then oxidized to a thioester, with concomitant reduction of NAD to NADH. The reduced NADH is then exchanged with the second NAD, and the thioester is attacked by a nucleophilic inorganic phosphate to produce BPG. The chain is Glyceraldehyde-3-phosphate dehydrogenase (gap) from Priestia megaterium (strain DSM 319 / IMG 1521) (Bacillus megaterium).